The following is a 333-amino-acid chain: MSKPVVLSGVQPSGELTIGNYLGALRQWVKMQDDYECLFCIVDLHAITVRQDPESLRKATLDVLALYLACGIDPEKSTIFIQSHVPEHTQLAWVLNCYTYFGEMGRMTQFKDKSARHAENINVGLFTYPVLMAADILLYQANQVPVGEDQKQHLEITRDIANRFNALYGDLFAVPEPFIPKAGARVMSLLEPEKKMSKSDENRNNVIGLLEDPKAVAKKIKRAVTDSDEPPVVRYDVQNKAGVSNLLDILSGVTGKSIAELETEFEGKMYGHLKGTVADEVSAMLTTLQERFHHFRNNEALLNDIAREGAQKARERAKATLDAVYQAVGFVSL.

ATP-binding positions include 11–13 (QPS) and 19–20 (GN). Positions 12-20 (PSGELTIGN) match the 'HIGH' region motif. An L-tryptophan-binding site is contributed by Asp-135. ATP-binding positions include 147-149 (GED), Val-186, and 195-199 (KMSKS). The short motif at 195-199 (KMSKS) is the 'KMSKS' region element.

It belongs to the class-I aminoacyl-tRNA synthetase family. Homodimer.

It is found in the cytoplasm. The enzyme catalyses tRNA(Trp) + L-tryptophan + ATP = L-tryptophyl-tRNA(Trp) + AMP + diphosphate + H(+). Functionally, catalyzes the attachment of tryptophan to tRNA(Trp). In Pasteurella multocida (strain Pm70), this protein is Tryptophan--tRNA ligase.